Consider the following 323-residue polypeptide: Ribosomal RNA small subunit methyltransferase H (323 aa).

S-adenosyl-L-methionine-binding positions include 44 to 46 (AGH), Asp64, Tyr91, Asp112, and Gln119.

This sequence belongs to the methyltransferase superfamily. RsmH family.

The protein resides in the cytoplasm. It catalyses the reaction cytidine(1402) in 16S rRNA + S-adenosyl-L-methionine = N(4)-methylcytidine(1402) in 16S rRNA + S-adenosyl-L-homocysteine + H(+). Functionally, specifically methylates the N4 position of cytidine in position 1402 (C1402) of 16S rRNA. In Nitratidesulfovibrio vulgaris (strain ATCC 29579 / DSM 644 / CCUG 34227 / NCIMB 8303 / VKM B-1760 / Hildenborough) (Desulfovibrio vulgaris), this protein is Ribosomal RNA small subunit methyltransferase H.